We begin with the raw amino-acid sequence, 211 residues long: Uridine kinase (211 aa).

15-22 is an ATP binding site; it reads GGSGSGKT.

It belongs to the uridine kinase family.

It localises to the cytoplasm. The catalysed reaction is uridine + ATP = UMP + ADP + H(+). The enzyme catalyses cytidine + ATP = CMP + ADP + H(+). Its pathway is pyrimidine metabolism; CTP biosynthesis via salvage pathway; CTP from cytidine: step 1/3. The protein operates within pyrimidine metabolism; UMP biosynthesis via salvage pathway; UMP from uridine: step 1/1. The protein is Uridine kinase of Lactobacillus helveticus (strain DPC 4571).